The following is an 883-amino-acid chain: NF-X1-type zinc finger protein NFXL2 (883 aa).

The segment covering 1–10 has biased composition (polar residues); the sequence is MTNMAGTATT. The segment at 1 to 44 is disordered; it reads MTNMAGTATTEFRWKSPPQPPSQEQPISDSDSDSGSDSENHQHR. The segment at 87–152 adopts an RING-type; degenerate zinc-finger fold; that stretch reads CLICLERIKR…EAVWNCPKCR (66 aa). 11 consecutive NF-X1-type zinc fingers follow at residues 198-216, 250-269, 303-322, 357-377, 410-429, 437-456, 494-515, 523-568, 605-636, 646-664, and 709-738; these read CGHC…SCPK, CNIH…PCRE, CGKH…LCPY, CGYH…TCRI, CARH…PCSE, CRNH…PCPI, CRHG…PCRL, CGHK…RCPE, CGNH…KCDL, CQHP…PCKT, and CTHL…RCKC. Residues 798-824 form a disordered region; it reads EIEEKEEPSGKNASKRRKRRGRGQDIQ. A helical membrane pass occupies residues 841–863; it reads MVVMLVAMLAAVSYYGYKGLLWL.

The protein belongs to the NFX1 family. As to quaternary structure, interacts with ADO1/ZTL. As to expression, constitutively expressed in mesophyll and guard cells.

The protein localises to the nucleus. The protein resides in the membrane. It functions in the pathway protein modification; protein ubiquitination. Probable transcriptional regulator. May mediate E2- or E3-dependent ubiquitination. Required to gate light sensitivity during the night. Regulates the speed of the clock by acting in the feedback loop between CCA1, LHY and APRR1/TOC1. Promotes the expression of CCA1 at night but not by days. This activational effect is enhanced by interaction with ADO1/ZTL. Association with ADO1/ZTL is not leading to the degradation of NFXL2. Confers sensitivity to osmotic stress such as high salinity. Prevents H(2)O(2) production and abscisic acid accumulation. Part of a regulatory network that integrates the biosynthesis and action of abscisic acid, reactive oxygen species and cuticle components. This is NF-X1-type zinc finger protein NFXL2 (NFXL2) from Arabidopsis thaliana (Mouse-ear cress).